Here is a 218-residue protein sequence, read N- to C-terminus: Adenylate kinase (218 aa).

Position 10–15 (10–15 (GAGKGT)) interacts with ATP. Residues 30–59 (STGDMLRAAVKEETPLGRKAKEVMDSGNLV) are NMP. AMP is bound by residues threonine 31, arginine 36, 57 to 59 (NLV), 85 to 88 (GFPR), and glutamine 92. Residues 122–159 (GRRVHPASGRTYHLTFNPPQQQGVDDETGEPLIQRVDD) are LID. Residues arginine 123 and 132-133 (TY) each bind ATP. Arginine 156 and arginine 167 together coordinate AMP. ATP is bound at residue glycine 203.

Belongs to the adenylate kinase family. Monomer.

It localises to the cytoplasm. The catalysed reaction is AMP + ATP = 2 ADP. It participates in purine metabolism; AMP biosynthesis via salvage pathway; AMP from ADP: step 1/1. Catalyzes the reversible transfer of the terminal phosphate group between ATP and AMP. Plays an important role in cellular energy homeostasis and in adenine nucleotide metabolism. This chain is Adenylate kinase, found in Chlorobium phaeovibrioides (strain DSM 265 / 1930) (Prosthecochloris vibrioformis (strain DSM 265)).